The following is a 225-amino-acid chain: Uracil-DNA glycosylase (225 aa).

The Proton acceptor role is filled by Asp65.

It belongs to the uracil-DNA glycosylase (UDG) superfamily. UNG family.

It is found in the cytoplasm. It carries out the reaction Hydrolyzes single-stranded DNA or mismatched double-stranded DNA and polynucleotides, releasing free uracil.. In terms of biological role, excises uracil residues from the DNA which can arise as a result of misincorporation of dUMP residues by DNA polymerase or due to deamination of cytosine. The chain is Uracil-DNA glycosylase from Bacillus thuringiensis subsp. konkukian (strain 97-27).